We begin with the raw amino-acid sequence, 68 residues long: DNA-directed RNA polymerase subunit omega (68 aa).

The protein belongs to the RNA polymerase subunit omega family. In terms of assembly, the RNAP catalytic core consists of 2 alpha, 1 beta, 1 beta' and 1 omega subunit. When a sigma factor is associated with the core the holoenzyme is formed, which can initiate transcription.

The catalysed reaction is RNA(n) + a ribonucleoside 5'-triphosphate = RNA(n+1) + diphosphate. In terms of biological role, promotes RNA polymerase assembly. Latches the N- and C-terminal regions of the beta' subunit thereby facilitating its interaction with the beta and alpha subunits. The protein is DNA-directed RNA polymerase subunit omega of Sulfurovum sp. (strain NBC37-1).